The primary structure comprises 210 residues: MAFVKRVTQETNIQLALDLDGGSVSVRESILGKEYASGDGQTIHVHTGVGFLDHMLTALAKHGGWSLILECIGDLHIDDHHTVEDCGIALGQAFKEALGSVRGIKRFGHGFAPLDEALSRAVVDFSNRPFAVVELGLKRERIGQLSTEMIPHFLESFATEARITMHVDCLRGTNDHHRSESAFKALAIAIREARTPTGRDDVPSTKGVLA.

This sequence belongs to the imidazoleglycerol-phosphate dehydratase family.

It carries out the reaction D-erythro-1-(imidazol-4-yl)glycerol 3-phosphate = 3-(imidazol-4-yl)-2-oxopropyl phosphate + H2O. It participates in amino-acid biosynthesis; L-histidine biosynthesis; L-histidine from 5-phospho-alpha-D-ribose 1-diphosphate: step 6/9. This is Imidazoleglycerol-phosphate dehydratase (HIS3) from Candida glabrata (strain ATCC 2001 / BCRC 20586 / JCM 3761 / NBRC 0622 / NRRL Y-65 / CBS 138) (Yeast).